The following is a 426-amino-acid chain: Gamma-glutamyl phosphate reductase (426 aa).

The protein belongs to the gamma-glutamyl phosphate reductase family.

It is found in the cytoplasm. It carries out the reaction L-glutamate 5-semialdehyde + phosphate + NADP(+) = L-glutamyl 5-phosphate + NADPH + H(+). It participates in amino-acid biosynthesis; L-proline biosynthesis; L-glutamate 5-semialdehyde from L-glutamate: step 2/2. Catalyzes the NADPH-dependent reduction of L-glutamate 5-phosphate into L-glutamate 5-semialdehyde and phosphate. The product spontaneously undergoes cyclization to form 1-pyrroline-5-carboxylate. The sequence is that of Gamma-glutamyl phosphate reductase from Ralstonia pickettii (strain 12J).